Consider the following 116-residue polypeptide: Large ribosomal subunit protein bL20c (116 aa).

The protein belongs to the bacterial ribosomal protein bL20 family.

Its subcellular location is the plastid. It localises to the chloroplast. Functionally, binds directly to 23S ribosomal RNA and is necessary for the in vitro assembly process of the 50S ribosomal subunit. It is not involved in the protein synthesizing functions of that subunit. The sequence is that of Large ribosomal subunit protein bL20c from Oltmannsiellopsis viridis (Marine flagellate).